The chain runs to 403 residues: Alkaline protease 1 (403 aa).

The first 21 residues, 1–21 (MHSFKRSLLLLGALLPAVFGA), serve as a signal peptide directing secretion. The propeptide occupies 22-124 (PVEPRRAAEK…QIWYIDALTS (103 aa)). The Inhibitor I9 domain maps to 35–119 (KYIVTFKSGL…HVEEDQIWYI (85 aa)). Residues 129–403 (PWGLGAISHK…NLLAYNGADE (275 aa)) enclose the Peptidase S8 domain. Active-site charge relay system residues include aspartate 161 and histidine 192. An N-linked (GlcNAc...) asparagine glycan is attached at asparagine 252. Catalysis depends on serine 348, which acts as the Charge relay system.

It belongs to the peptidase S8 family.

Its subcellular location is the secreted. The catalysed reaction is Hydrolysis of proteins with broad specificity, and of Bz-Arg-OEt &gt; Ac-Tyr-OEt. Does not hydrolyze peptide amides.. Its function is as follows. Secreted alkaline protease that allows assimilation of proteinaceous substrates. The chain is Alkaline protease 1 (alp1) from Emericella nidulans (strain FGSC A4 / ATCC 38163 / CBS 112.46 / NRRL 194 / M139) (Aspergillus nidulans).